The primary structure comprises 718 residues: Centromere/kinetochore protein zw10 (718 aa).

Belongs to the ZW10 family.

The protein resides in the cytoplasm. It localises to the nucleus. The protein localises to the chromosome. It is found in the centromere. Its subcellular location is the kinetochore. In terms of biological role, required for accurate chromosome segregation. The polypeptide is Centromere/kinetochore protein zw10 (mit(1)15) (Drosophila pseudoobscura pseudoobscura (Fruit fly)).